Consider the following 590-residue polypeptide: Arginine--tRNA ligase (590 aa).

Residues 138–148 carry the 'HIGH' region motif; it reads ANPTGPLHIGH.

It belongs to the class-I aminoacyl-tRNA synthetase family. Monomer.

It is found in the cytoplasm. It carries out the reaction tRNA(Arg) + L-arginine + ATP = L-arginyl-tRNA(Arg) + AMP + diphosphate. This is Arginine--tRNA ligase from Orientia tsutsugamushi (strain Boryong) (Rickettsia tsutsugamushi).